A 3907-amino-acid polypeptide reads, in one-letter code: A-kinase anchor protein 9 (3907 aa).

Over residues 1 to 14 the composition is skewed to basic and acidic residues; that stretch reads MEDEERQKKLEAGK. The tract at residues 1–57 is disordered; sequence MEDEERQKKLEAGKAKLAQFRQRKAQSDGQSPSKKQKKKRKTSSSKHDVSAHHDLNI. The span at 34–44 shows a compositional bias: basic residues; it reads KKQKKKRKTSS. A compositionally biased stretch (basic and acidic residues) spans 45–56; it reads SKHDVSAHHDLN. Coiled-coil stretches lie at residues 152 to 902, 932 to 1010, 1088 to 1173, 1241 to 1268, 1324 to 1380, 1422 to 1447, and 1573 to 1647; these read DSPT…ELHL, EVVE…ENVQ, QPSE…QTMK, ELQD…EEYN, KLSS…ESTV, VKEE…VAKV, and SMDA…DNEN. Ser153 is subject to Phosphoserine. Ser1327 carries the phosphoserine modification. Residues 1682 to 1692 show a composition bias toward low complexity; that stretch reads STQTQNGNENQ. Residues 1682-1713 form a disordered region; it reads STQTQNGNENQGEVEEQTFKEKELDRKPEDVP. The segment covering 1698 to 1711 has biased composition (basic and acidic residues); it reads QTFKEKELDRKPED. Phosphoserine is present on Ser1765. Coiled coils occupy residues 1845 to 2443, 2532 to 2549, 2591 to 2764, 3061 to 3088, 3120 to 3466, and 3583 to 3685; these read NISS…VEKI, ETEM…IVEE, QLRE…SKKA, LNCL…ADRR, ELLE…NLNE, and SLTE…NDSL. The tract at residues 2542–2555 is PKA-RII subunit binding domain; it reads NLQKIVEEKVAAAL. A disordered region spans residues 3377–3405; it reads RQQMEKDRQVHRKTLQTEQEANTEGQKKM. A phosphoserine mark is found at Ser3690, Ser3842, Ser3865, and Ser3897.

As to quaternary structure, interacts with the regulatory region of protein kinase N (PKN), protein phosphatase 2A (PP2A), protein phosphatase 1 (PP1) and the immature non-phosphorylated form of PKC epsilon. Interacts with CIP4 and FNBP1. Interacts with chloride intracellular channel proteins CLIC1, CLIC4 and CLIC5. CSNK1D binding promotes its centrosomal subcellular location. Interacts with GM130/GOLGA2; leading to recruitment to the Golgi apparatus. Interacts with KCNQ1; targets protein kinase A (PKA) catalytic and regulatory subunits and protein phosphatase 1 (PP1), to the heterodimer KCNQ1-KCNE1. Interacts with PDE4DIP isoform 13/MMG8/SMYLE; this interaction stabilizes both proteins. In complex with PDE4DIP isoform 13, recruits CAMSAP2 to the Golgi apparatus. Forms a pericentrosomal complex with CDK5RAP2, EB1/MAPRE1 and PDE4DIP isoform 13; within this complex, MAPRE1 binding to CDK5RAP2 may be mediated by PDE4DIP. Interacts with MAPRE1 and MAPRE3. Interacts (via C-terminus) with CAMSAP2; this interaction is much stronger in the presence of PDE4DIP isoform 13/MMG8/SMYLE. Interacts with CAMSAP3. Interacts (via C-terminus) with the gamma-tubulin ring complex (gamma-TuRC), composed of gamma-tubulin, TUBGCP2, TUBGCP3, TUBGCP4, TUBGCP5 and TUBGCP6. In terms of tissue distribution, widely expressed. Isoform 4: Highly expressed in skeletal muscle and in pancreas.

Its subcellular location is the golgi apparatus. The protein localises to the cytoplasm. It localises to the cytoskeleton. The protein resides in the microtubule organizing center. It is found in the centrosome. Scaffolding protein that assembles several protein kinases and phosphatases on the centrosome and Golgi apparatus. Required to maintain the integrity of the Golgi apparatus. Required for microtubule nucleation at the cis-side of the Golgi apparatus. Required for association of the centrosomes with the poles of the bipolar mitotic spindle during metaphase. In complex with PDE4DIP isoform 13/MMG8/SMYLE, recruits CAMSAP2 to the Golgi apparatus and tethers non-centrosomal minus-end microtubules to the Golgi, an important step for polarized cell movement. In complex with PDE4DIP isoform 13/MMG8/SMYLE, EB1/MAPRE1 and CDK5RAP2, contributes to microtubules nucleation and extension also from the centrosome to the cell periphery. Its function is as follows. Associated with the N-methyl-D-aspartate receptor and is specifically found in the neuromuscular junction (NMJ) as well as in neuronal synapses, suggesting a role in the organization of postsynaptic specializations. The protein is A-kinase anchor protein 9 (AKAP9) of Homo sapiens (Human).